The sequence spans 64 residues: Large ribosomal subunit protein uL29 (64 aa).

It belongs to the universal ribosomal protein uL29 family.

This Synechococcus elongatus (strain ATCC 33912 / PCC 7942 / FACHB-805) (Anacystis nidulans R2) protein is Large ribosomal subunit protein uL29.